Consider the following 381-residue polypeptide: Putrescine N-methyltransferase 3 (381 aa).

Residues 21-81 (MNGYQNGTSK…TISHDNGNEL (61 aa)) form a disordered region. Polar residues-rich tracts occupy residues 23–39 (GYQNGTSKHQNGHQNGT) and 46–81 (HQNGISEHQNGHQNGTSEHQNGHQNGTISHDNGNEL). The 238-residue stretch at 92-329 (PGWFSEFSAL…GVIGYMLCST (238 aa)) folds into the PABS domain. S-adenosyl-L-methionine-binding positions include Q123, E198, and 229–230 (DG). The Proton acceptor role is filled by D248. Position 317 (Y317) interacts with S-adenosyl-L-methionine.

This sequence belongs to the class I-like SAM-binding methyltransferase superfamily. Putrescine methyltransferase family. As to expression, predominantly expressed in roots.

It catalyses the reaction putrescine + S-adenosyl-L-methionine = N-methylputrescine + S-adenosyl-L-homocysteine + H(+). It participates in alkaloid biosynthesis; nicotine biosynthesis. In terms of biological role, involved in the biosynthesis of pyridine alkaloid natural products, leading mainly to the production of anabasine, anatabine, nicotine and nornicotine, effective deterrents against herbivores with antiparasitic and pesticide properties (neurotoxins); nornicotine serves as the precursor in the synthesis of the carcinogen compound N'-nitrosonornicotine (NNN). Methyltransferase that mediates the conversion of putrescine to N-methylputrescine. Promotes leaves ripening. The sequence is that of Putrescine N-methyltransferase 3 from Nicotiana tabacum (Common tobacco).